The primary structure comprises 100 residues: Bombyxin A-2 homolog (100 aa).

Residues 1-18 form the signal peptide; that stretch reads MRTQVLFLIVVLAVMASG. 3 disulfides stabilise this stretch: C26/C85, C38/C98, and C84/C89. Positions 47–75 are cleaved as a propeptide — c peptide like; it reads PPYISSENEGYGWKWLERQRARQLDEARG.

The protein belongs to the insulin family. In terms of assembly, heterodimer of a B chain and an A chain linked by two disulfide bonds.

It localises to the secreted. In terms of biological role, brain peptide responsible for activation of prothoracic glands to produce ecdysone in insects. This chain is Bombyxin A-2 homolog (SBXA2), found in Samia cynthia (Ailanthus silkmoth).